The chain runs to 280 residues: Purine nucleoside phosphorylase (280 aa).

Residues S15 and 55 to 56 (RH) each bind phosphate. M194 is a binding site for substrate. A phosphate-binding site is contributed by T195. 218–220 (DLD) serves as a coordination point for substrate.

Belongs to the PNP/MTAP phosphorylase family. MTAP subfamily. As to quaternary structure, homohexamer. Dimer of a homotrimer.

The enzyme catalyses a purine D-ribonucleoside + phosphate = a purine nucleobase + alpha-D-ribose 1-phosphate. Its pathway is purine metabolism; purine nucleoside salvage. Functionally, purine nucleoside phosphorylase involved in purine salvage. The sequence is that of Purine nucleoside phosphorylase from Streptomyces coelicolor (strain ATCC BAA-471 / A3(2) / M145).